The primary structure comprises 165 residues: Transcriptional repressor NrdR (165 aa).

Residues 3–34 (CPYCGQLNNRVVDSRLSRSEFAVRRRRECLDC) fold into a zinc finger. The ATP-cone domain maps to 49–139 (VMVVKKDGRR…VYREFKDVDD (91 aa)).

This sequence belongs to the NrdR family. The cofactor is Zn(2+).

Negatively regulates transcription of bacterial ribonucleotide reductase nrd genes and operons by binding to NrdR-boxes. This Desulforapulum autotrophicum (strain ATCC 43914 / DSM 3382 / VKM B-1955 / HRM2) (Desulfobacterium autotrophicum) protein is Transcriptional repressor NrdR.